The chain runs to 494 residues: Sphingosine-1-phosphate transporter MFSD2B (494 aa).

Pro residues predominate over residues Met-1 to Val-12. The interval Met-1 to Asp-26 is disordered. A run of 10 helical transmembrane segments spans residues Leu-103–Phe-123, Cys-140–Leu-160, Met-179–Ser-199, Ile-223–Val-243, Val-277–Phe-297, Asn-310–Leu-330, Ala-339–Pro-359, Val-360–Trp-380, Thr-402–Ile-422, and Val-449–Gly-469. Positions Lys-473–Ala-494 are disordered. A compositionally biased stretch (basic residues) spans Leu-485–Ala-494.

This sequence belongs to the major facilitator superfamily. In terms of tissue distribution, widely expressed with highest expression in spleen, lung and testis. Predominantly expressed in erythroid lineages giving rise to erythrocytes and platelets, but absent in lymphoid lineages.

The protein resides in the cell membrane. It catalyses the reaction sphing-4-enine 1-phosphate(in) = sphing-4-enine 1-phosphate(out). The enzyme catalyses sphinganine 1-phosphate(in) = sphinganine 1-phosphate(out). The catalysed reaction is sphinga-4E,14Z-dienine-1-phosphate(in) = sphinga-4E,14Z-dienine-1-phosphate(out). Lipid transporter that specifically mediates export of sphingosine-1-phosphate in red blood cells and platelets. Sphingosine-1-phosphate is a signaling sphingolipid and its export from red blood cells into in the plasma is required for red blood cell morphology. Sphingosine-1-phosphate export from platelets is required for platelet aggregation and thrombus formation. Mediates the export of different sphingosine-1-phosphate (S1P) species, including S1P(d18:0) (sphinganine 1-phosphate), S1P (d18:1) (sphing-4-enine 1-phosphate) and S1P (d18:2) (sphinga-4E,14Z-dienine-1-phosphate). Release of sphingosine-1-phosphate is facilitated by a proton gradient. In contrast, cations, such as sodium, are not required to drive sphingosine-1-phosphate transport. In addition to export, also able to mediate S1P import. Does not transport lysophosphatidylcholine (LPC). This Mus musculus (Mouse) protein is Sphingosine-1-phosphate transporter MFSD2B.